Here is a 364-residue protein sequence, read N- to C-terminus: Uroporphyrinogen decarboxylase (364 aa).

Residues 28 to 32 (RQAGR), Asp-78, Tyr-160, Thr-215, and His-333 contribute to the substrate site.

This sequence belongs to the uroporphyrinogen decarboxylase family. In terms of assembly, homodimer.

It localises to the cytoplasm. The catalysed reaction is uroporphyrinogen III + 4 H(+) = coproporphyrinogen III + 4 CO2. The protein operates within porphyrin-containing compound metabolism; protoporphyrin-IX biosynthesis; coproporphyrinogen-III from 5-aminolevulinate: step 4/4. Catalyzes the decarboxylation of four acetate groups of uroporphyrinogen-III to yield coproporphyrinogen-III. The chain is Uroporphyrinogen decarboxylase from Burkholderia pseudomallei (strain 1106a).